Reading from the N-terminus, the 610-residue chain is Elongation factor 4 (610 aa).

Residues 11-193 enclose the tr-type G domain; that stretch reads EKIRNFSIIA…QIVEKVPAPT (183 aa). Residues 23–28 and 140–143 contribute to the GTP site; these read DHGKST and NKID.

The protein belongs to the TRAFAC class translation factor GTPase superfamily. Classic translation factor GTPase family. LepA subfamily.

It is found in the cell membrane. It carries out the reaction GTP + H2O = GDP + phosphate + H(+). In terms of biological role, required for accurate and efficient protein synthesis under certain stress conditions. May act as a fidelity factor of the translation reaction, by catalyzing a one-codon backward translocation of tRNAs on improperly translocated ribosomes. Back-translocation proceeds from a post-translocation (POST) complex to a pre-translocation (PRE) complex, thus giving elongation factor G a second chance to translocate the tRNAs correctly. Binds to ribosomes in a GTP-dependent manner. The chain is Elongation factor 4 from Streptococcus pyogenes serotype M49 (strain NZ131).